The primary structure comprises 88 residues: Conotoxin Gm9.1 (88 aa).

The signal sequence occupies residues 1 to 27 (MHLSLARSAVLMLLLLFALGNFVVVQS). A propeptide spanning residues 28–58 (GLITRDVDNGQLTDNRRNLQTEWNPLSLFMS) is cleaved from the precursor. 3 cysteine pairs are disulfide-bonded: cysteine 62–cysteine 76, cysteine 66–cysteine 78, and cysteine 72–cysteine 83. Asparagine 87 carries the post-translational modification Asparagine amide.

It belongs to the conotoxin P superfamily. In terms of tissue distribution, expressed by the venom duct.

It is found in the secreted. Functionally, neurotoxin. In vivo, elicits 'spasmodic' symptomatology. In Conus gloriamaris (Glory-of-the-Sea cone), this protein is Conotoxin Gm9.1.